Here is a 493-residue protein sequence, read N- to C-terminus: Glycerol kinase (493 aa).

Thr11 lines the ADP pocket. Residues Thr11, Thr12, and Ser13 each coordinate ATP. Thr11 is a sn-glycerol 3-phosphate binding site. Residue Arg15 participates in ADP binding. The sn-glycerol 3-phosphate site is built by Arg80, Glu81, Tyr132, and Asp241. Residues Arg80, Glu81, Tyr132, Asp241, and Gln242 each coordinate glycerol. ADP-binding residues include Thr263 and Gly306. The ATP site is built by Thr263, Gly306, Gln310, and Gly408. Gly408 lines the ADP pocket.

It belongs to the FGGY kinase family.

The enzyme catalyses glycerol + ATP = sn-glycerol 3-phosphate + ADP + H(+). It participates in polyol metabolism; glycerol degradation via glycerol kinase pathway; sn-glycerol 3-phosphate from glycerol: step 1/1. With respect to regulation, inhibited by fructose 1,6-bisphosphate (FBP). Functionally, key enzyme in the regulation of glycerol uptake and metabolism. Catalyzes the phosphorylation of glycerol to yield sn-glycerol 3-phosphate. The sequence is that of Glycerol kinase from Cereibacter sphaeroides (strain KD131 / KCTC 12085) (Rhodobacter sphaeroides).